An 85-amino-acid polypeptide reads, in one-letter code: UPF0297 protein CHY_0540 (85 aa).

Belongs to the UPF0297 family.

The chain is UPF0297 protein CHY_0540 from Carboxydothermus hydrogenoformans (strain ATCC BAA-161 / DSM 6008 / Z-2901).